The chain runs to 481 residues: ADAMTS-like protein 5 (481 aa).

Positions 1 to 42 (MGKLRPGRVEWLASGHTERPHLFQNLLLFLWALLNCGLGVSA) are cleaved as a signal peptide. One can recognise a TSP type-1 domain in the interval 45 to 97 (PGEWTPWVSWTRCSSSCGRGVSVRSRRCLRLPGEEPCWGDSHEYRLCQLPDCP). 3 disulfides stabilise this stretch: Cys57-Cys91, Cys61-Cys96, and Cys72-Cys81. Residue Asn218 is glycosylated (N-linked (GlcNAc...) asparagine). The interval 331-361 (QPQPRGVEPQPPAAPAVTPAQTPTLAPDPCP) is disordered. Residues 345-355 (PAVTPAQTPTL) show a composition bias toward low complexity. 3 cysteine pairs are disulfide-bonded: Cys360–Cys425, Cys363–Cys427, and Cys377–Cys479. The NTR domain maps to 360–479 (CPPCPDTRGR…SRIRLTARRC (120 aa)).

In terms of assembly, interacts with heparin, FBN1 and FBN2. Proteolytically cleaved to release a C-terminal fragment containing the NTR domain. In terms of processing, contains at least one additional N-linked glycosylation site.

The protein localises to the secreted. It localises to the extracellular space. The protein resides in the extracellular matrix. In terms of biological role, may play a role in modulation of fibrillin microfibrils in the extracellular matrix (ECM). The protein is ADAMTS-like protein 5 (ADAMTSL5) of Homo sapiens (Human).